A 115-amino-acid polypeptide reads, in one-letter code: NADH-ubiquinone oxidoreductase chain 3 (115 aa).

A run of 3 helical transmembrane segments spans residues 4 to 24, 55 to 75, and 84 to 104; these read ILTL…AFWL, FFLV…LLPL, and SYLT…GLAY.

Belongs to the complex I subunit 3 family. As to quaternary structure, core subunit of respiratory chain NADH dehydrogenase (Complex I) which is composed of 45 different subunits. Interacts with TMEM186. Interacts with TMEM242.

It localises to the mitochondrion inner membrane. The enzyme catalyses a ubiquinone + NADH + 5 H(+)(in) = a ubiquinol + NAD(+) + 4 H(+)(out). Functionally, core subunit of the mitochondrial membrane respiratory chain NADH dehydrogenase (Complex I) which catalyzes electron transfer from NADH through the respiratory chain, using ubiquinone as an electron acceptor. Essential for the catalytic activity of complex I. In Necromys lactens (Rufous-bellied bolo mouse), this protein is NADH-ubiquinone oxidoreductase chain 3.